The following is a 411-amino-acid chain: Transforming growth factor beta regulator 1 (411 aa).

Disordered stretches follow at residues 1–29 (MSLLDGLASSPRAPLQSSKARMKKLPKKS) and 119–146 (GPISGPSTGAEEPFGKKTKKEKKEKGKE). N-acetylserine is present on Ser2. The residue at position 10 (Ser10) is a Phosphoserine. Residues 182–241 (VFPIGLGGLTVYSLGEIITDRPGFHDESAIYPVGYCSTRIYASMKCPDQKCLYTCQIKDG) enclose the FYR N-terminal domain. In terms of domain architecture, FYR C-terminal spans 242-321 (GVQPQFEIVP…RKCINYQWVK (80 aa)).

The protein belongs to the TBRG1 family. As to quaternary structure, interacts with CDKN2A and MDM2. Ubiquitinated; mediated by MDM2 and leading to its subsequent proteasomal degradation. Widely expressed at low levels in most tissues, with highest levels in pancreas, lung and liver. Expression is decreased in primary tumors including lung, liver, breast, pancreas and kidney carcinomas, chronic lymphocytic leukemia and diffuse large B-cell lymphoma.

It localises to the nucleus. Its function is as follows. Acts as a growth inhibitor. Can activate p53/TP53, causes G1 arrest and collaborates with CDKN2A to restrict proliferation, but does not require either protein to inhibit DNA synthesis. Redistributes CDKN2A into the nucleoplasm. Involved in maintaining chromosomal stability. This is Transforming growth factor beta regulator 1 (TBRG1) from Homo sapiens (Human).